We begin with the raw amino-acid sequence, 665 residues long: DNA ligase (665 aa).

Residues 32–36 (DSEYD), 81–82 (SL), and glutamate 110 contribute to the NAD(+) site. Lysine 112 serves as the catalytic N6-AMP-lysine intermediate. NAD(+)-binding residues include arginine 133, glutamate 167, lysine 283, and lysine 307. Zn(2+)-binding residues include cysteine 401, cysteine 404, cysteine 419, and cysteine 424. A BRCT domain is found at 586 to 665 (EGHPDFSGKT…AAFIEKQNGI (80 aa)).

Belongs to the NAD-dependent DNA ligase family. LigA subfamily. Mg(2+) serves as cofactor. It depends on Mn(2+) as a cofactor.

The catalysed reaction is NAD(+) + (deoxyribonucleotide)n-3'-hydroxyl + 5'-phospho-(deoxyribonucleotide)m = (deoxyribonucleotide)n+m + AMP + beta-nicotinamide D-nucleotide.. In terms of biological role, DNA ligase that catalyzes the formation of phosphodiester linkages between 5'-phosphoryl and 3'-hydroxyl groups in double-stranded DNA using NAD as a coenzyme and as the energy source for the reaction. It is essential for DNA replication and repair of damaged DNA. The sequence is that of DNA ligase from Staphylococcus epidermidis (strain ATCC 12228 / FDA PCI 1200).